Reading from the N-terminus, the 470-residue chain is 5-hydroxytryptamine receptor 2A (470 aa).

The tract at residues 1–23 (MDVLFEDNAPLSPTTSSLMPSNG) is disordered. The Extracellular portion of the chain corresponds to 1 to 80 (MDVLFEDNAP…LQEKNWSALL (80 aa)). The span at 10–21 (PLSPTTSSLMPS) shows a compositional bias: low complexity. Residues asparagine 38, asparagine 44, asparagine 51, and asparagine 54 are each glycosylated (N-linked (GlcNAc...) asparagine). The helical transmembrane segment at 81–97 (TAVVIILTIAGNILVIM) threads the bilayer. Residues 98–111 (AVSLEKKLQNATNY) lie on the Cytoplasmic side of the membrane. Residues 112 to 137 (FLMSLAIADMLLGFLVMPVSMLTILY) traverse the membrane as a helical segment. Topologically, residues 138–146 (GYRWPLPSK) are extracellular. The chain crosses the membrane as a helical span at residues 147–171 (LCAVWIYLDVLFSTASIMHLCAISL). Cysteine 148 and cysteine 227 form a disulfide bridge. Residue aspartate 155 coordinates serotonin. The DRY motif; important for ligand-induced conformation changes signature appears at 172–174 (DRY). Topologically, residues 172-191 (DRYVAIQNPIHHSRFNSRTK) are cytoplasmic. Residues 192 to 215 (AFLKIIAVWTISVGISMPIPVFGL) form a helical membrane-spanning segment. At 216–232 (QDDSKVFKEGSCLLADD) the chain is on the extracellular side. The chain crosses the membrane as a helical span at residues 233-258 (NFVLIGSFVSFFIPLTIMVITYFLTI). Topologically, residues 259–321 (KSLQKEATLC…QSISNEQKAC (63 aa)) are cytoplasmic. Phosphoserine is present on serine 280. The helical transmembrane segment at 322 to 347 (KVLGIVFFLFVVMWCPFFITNIMAVI) threads the bilayer. Asparagine 342 is a serotonin binding site. An intrachain disulfide couples cysteine 348 to cysteine 352. Topologically, residues 348 to 355 (CKESCNED) are extracellular. The helical transmembrane segment at 356–381 (IIGALLNVFVWIGYLSSAVNPLVYTL) threads the bilayer. Residues 375–379 (NPLVY) carry the NPxxY motif; important for ligand-induced conformation changes and signaling motif. Over 382 to 470 (FNKTYRSAFS…NTVNEKVSCV (89 aa)) the chain is Cytoplasmic. Residues 468–470 (SCV) carry the PDZ-binding motif.

This sequence belongs to the G-protein coupled receptor 1 family. Interacts (via C-terminus) with MPDZ and PATJ. May interact (via C-terminus) with MPP3, PRDX6, DLG4, DLG1, CASK, APBA1 and MAGI2. Interacts with GRM2 and DRD2; this may affect signaling. Ubiquitous.

The protein localises to the cell membrane. The protein resides in the cell projection. It localises to the dendrite. Its subcellular location is the axon. It is found in the cytoplasmic vesicle. The protein localises to the membrane. The protein resides in the caveola. It localises to the presynapse. With respect to regulation, G-protein coupled receptor activity is regulated by lipids: oleamide increases HTR2A-mediated activity. Its function is as follows. G-protein coupled receptor for 5-hydroxytryptamine (serotonin). Also functions as a receptor for various drugs and psychoactive substances, including mescaline, psilocybin, 1-(2,5-dimethoxy-4-iodophenyl)-2-aminopropane (DOI) and lysergic acid diethylamide (LSD). Ligand binding causes a conformation change that triggers signaling via guanine nucleotide-binding proteins (G proteins) and modulates the activity of downstream effectors. HTR2A is coupled to G(q)/G(11) G alpha proteins and activates phospholipase C-beta, releasing diacylglycerol (DAG) and inositol 1,4,5-trisphosphate (IP3) second messengers that modulate the activity of phosphatidylinositol 3-kinase and promote the release of Ca(2+) ions from intracellular stores, respectively. Beta-arrestin family members inhibit signaling via G proteins and mediate activation of alternative signaling pathways. Affects neural activity, perception, cognition and mood. Plays a role in the regulation of behavior, including responses to anxiogenic situations and psychoactive substances. Plays a role in intestinal smooth muscle contraction, and may play a role in arterial vasoconstriction. The chain is 5-hydroxytryptamine receptor 2A (HTR2A) from Canis lupus familiaris (Dog).